The chain runs to 343 residues: Protein RecA (343 aa).

66 to 73 lines the ATP pocket; sequence GPESSGKT.

This sequence belongs to the RecA family.

It localises to the cytoplasm. Its function is as follows. Can catalyze the hydrolysis of ATP in the presence of single-stranded DNA, the ATP-dependent uptake of single-stranded DNA by duplex DNA, and the ATP-dependent hybridization of homologous single-stranded DNAs. It interacts with LexA causing its activation and leading to its autocatalytic cleavage. This chain is Protein RecA, found in Rickettsia massiliae (strain Mtu5).